The chain runs to 190 residues: uncharacterized protein (190 aa).

A helical transmembrane segment spans residues 12-34; the sequence is LLGLSIFLTTFLFVANFLPGIFA.

The protein resides in the membrane. This is an uncharacterized protein from Archaeoglobus fulgidus (strain ATCC 49558 / DSM 4304 / JCM 9628 / NBRC 100126 / VC-16).